The chain runs to 279 residues: Oxygen-dependent coproporphyrinogen-III oxidase (279 aa).

S102 contributes to the substrate binding site. Positions 106 and 116 each coordinate a divalent metal cation. H116 acts as the Proton donor in catalysis. 118-120 (NTR) contacts substrate. A divalent metal cation contacts are provided by H149 and H179. The tract at residues 244-279 (YVEFNLLYDRGTKFGLMTDGNIEAILMSLPPVVKFN) is important for dimerization.

The protein belongs to the aerobic coproporphyrinogen-III oxidase family. As to quaternary structure, homodimer. A divalent metal cation serves as cofactor.

The protein resides in the cytoplasm. It carries out the reaction coproporphyrinogen III + O2 + 2 H(+) = protoporphyrinogen IX + 2 CO2 + 2 H2O. The protein operates within porphyrin-containing compound metabolism; protoporphyrin-IX biosynthesis; protoporphyrinogen-IX from coproporphyrinogen-III (O2 route): step 1/1. Functionally, involved in the heme biosynthesis. Catalyzes the aerobic oxidative decarboxylation of propionate groups of rings A and B of coproporphyrinogen-III to yield the vinyl groups in protoporphyrinogen-IX. The polypeptide is Oxygen-dependent coproporphyrinogen-III oxidase (Rickettsia typhi (strain ATCC VR-144 / Wilmington)).